A 228-amino-acid polypeptide reads, in one-letter code: General odorant-binding protein 71 (228 aa).

Positions 1 to 20 are cleaved as a signal peptide; sequence MCGAIVLLLLVGTSPAPVEG. Residues 50 to 131 are disordered; the sequence is TMGEWGQRDR…GNSSSSSSST (82 aa). Positions 55–72 are enriched in basic and acidic residues; it reads GQRDRNGEEQQMMRDYGR. Over residues 83–99 the composition is skewed to low complexity; sequence GGQTSGSSSSGSAGEHS. Residues 111–120 show a composition bias toward gly residues; sequence AGQGGNGTRS. Residues 121-131 are compositionally biased toward low complexity; it reads GGNSSSSSSST. 2 cysteine pairs are disulfide-bonded: Cys138-Cys199 and Cys185-Cys208.

It belongs to the PBP/GOBP family.

The protein localises to the secreted. Functionally, present in the aqueous fluid surrounding olfactory sensory dendrites and are thought to aid in the capture and transport of hydrophobic odorants into and through this fluid. This is General odorant-binding protein 71 (Obp71) from Anopheles gambiae (African malaria mosquito).